Here is a 412-residue protein sequence, read N- to C-terminus: Serine hydroxymethyltransferase (412 aa).

(6S)-5,6,7,8-tetrahydrofolate contacts are provided by residues Leu117 and 121-123 (GHL). Position 226 is an N6-(pyridoxal phosphate)lysine (Lys226).

Belongs to the SHMT family. As to quaternary structure, homodimer. It depends on pyridoxal 5'-phosphate as a cofactor.

Its subcellular location is the cytoplasm. It carries out the reaction (6R)-5,10-methylene-5,6,7,8-tetrahydrofolate + glycine + H2O = (6S)-5,6,7,8-tetrahydrofolate + L-serine. The protein operates within one-carbon metabolism; tetrahydrofolate interconversion. It functions in the pathway amino-acid biosynthesis; glycine biosynthesis; glycine from L-serine: step 1/1. In terms of biological role, catalyzes the reversible interconversion of serine and glycine with tetrahydrofolate (THF) serving as the one-carbon carrier. This reaction serves as the major source of one-carbon groups required for the biosynthesis of purines, thymidylate, methionine, and other important biomolecules. Also exhibits THF-independent aldolase activity toward beta-hydroxyamino acids, producing glycine and aldehydes, via a retro-aldol mechanism. This is Serine hydroxymethyltransferase from Symbiobacterium thermophilum (strain DSM 24528 / JCM 14929 / IAM 14863 / T).